A 287-amino-acid polypeptide reads, in one-letter code: Probable endoribonuclease YicC (287 aa).

It belongs to the YicC/YloC family. It depends on a divalent metal cation as a cofactor.

Functionally, probably a ssRNA endonuclease. In terms of biological role, might contribute to small RNA (sRNA) regulation. This Haemophilus influenzae (strain ATCC 51907 / DSM 11121 / KW20 / Rd) protein is Probable endoribonuclease YicC.